Consider the following 310-residue polypeptide: MSKKIIDEVIDILEDKKYTYTMIEYPEHNRKSVDIVLNSKEPTLIRVSEDKITKEEISDLKKIAVSTLTASLVVTNEEEEDIVSVKADNVFAISPEGFKKVINGEKIFLYRTRGGIFIKIRNYILKHKREEMGYSIGDVAKFLGVSRKAIYDYEKGDSDVSLEVAEKLIDLFGDDIIGDVIWDSIKSKKEILEEGVAEFSPENFKAKLIYKLKESGLNALSLKLTAADLIVKDSDNNRYLVTIENKDYNKSMKKFYEAKKLASYTKSELVIIIRTSKMLKECEDLGYKTYEENDIHSLIDEIKGSNGRQG.

The HTH cro/C1-type domain maps to 125–180 (LKHKREEMGYSIGDVAKFLGVSRKAIYDYEKGDSDVSLEVAEKLIDLFGDDIIGDV). A DNA-binding region (H-T-H motif) is located at residues 136–155 (IGDVAKFLGVSRKAIYDYEK).

This Saccharolobus solfataricus (strain ATCC 35092 / DSM 1617 / JCM 11322 / P2) (Sulfolobus solfataricus) protein is Putative HTH-type transcriptional regulatory protein SSO0942.